The chain runs to 366 residues: Pyrimidine monooxygenase RutA (366 aa).

FMN contacts are provided by residues 49–50 (IK), Asn115, Glu124, 140–141 (RY), and Ser190.

Belongs to the NtaA/SnaA/DszA monooxygenase family. RutA subfamily.

It carries out the reaction uracil + FMNH2 + NADH + O2 = (Z)-3-ureidoacrylate + FMN + NAD(+) + H2O + H(+). The enzyme catalyses thymine + FMNH2 + NADH + O2 = (Z)-2-methylureidoacrylate + FMN + NAD(+) + H2O + H(+). Functionally, catalyzes the pyrimidine ring opening between N-3 and C-4 by an unusual flavin hydroperoxide-catalyzed mechanism, adding oxygen atoms in the process to yield ureidoacrylate peracid, that immediately reacts with FMN forming ureidoacrylate and FMN-N(5)-oxide. The FMN-N(5)-oxide reacts spontaneously with NADH to produce FMN. Requires the flavin reductase RutF to regenerate FMN in vivo. The sequence is that of Pyrimidine monooxygenase RutA from Serratia proteamaculans (strain 568).